A 338-amino-acid polypeptide reads, in one-letter code: Bifunctional methylenetetrahydrofolate dehydrogenase/cyclohydrolase 2, mitochondrial (338 aa).

Substrate is bound by residues 89-93 and 136-138; these read YVRNK and VQL. Residues 205 to 207 and arginine 238 each bind NAD(+); that span reads GRS. Position 314 to 318 (314 to 318) interacts with substrate; it reads PGGVG.

Belongs to the tetrahydrofolate dehydrogenase/cyclohydrolase family. Mg(2+) serves as cofactor. As to expression, widely expressed.

The protein resides in the mitochondrion inner membrane. The catalysed reaction is (6R)-5,10-methylene-5,6,7,8-tetrahydrofolate + NADP(+) = (6R)-5,10-methenyltetrahydrofolate + NADPH. The enzyme catalyses (6R)-5,10-methylene-5,6,7,8-tetrahydrofolate + NAD(+) = (6R)-5,10-methenyltetrahydrofolate + NADH. It catalyses the reaction (6R)-5,10-methenyltetrahydrofolate + H2O = (6R)-10-formyltetrahydrofolate + H(+). It participates in one-carbon metabolism; tetrahydrofolate interconversion. In terms of biological role, bifunctional mitochondrial folate-interconverting enzyme that has both NAD/NADP-dependent methylenetetrahydrofolate dehydrogenase and methenyltetrahydrofolate cyclohydrolase activities. Functionally, has no NAD/NADP-dependent methylenetetrahydrofolate dehydrogenase activity. The protein is Bifunctional methylenetetrahydrofolate dehydrogenase/cyclohydrolase 2, mitochondrial of Rattus norvegicus (Rat).